Reading from the N-terminus, the 58-residue chain is Preprotein translocase subunit SecG (58 aa).

Residues 1–32 (MARKRRKGGEGLVTAIGLVRFYEEVEEKIKVP) lie on the Cytoplasmic side of the membrane. The chain crosses the membrane as a helical span at residues 33–54 (PEAVIGAAFALSIMTIALDLLL). The Extracellular portion of the chain corresponds to 55–58 (KAAR).

It belongs to the SEC61-beta family. As to quaternary structure, component of the protein translocase complex. Heterotrimer consisting of alpha (SecY), beta (SecG) and gamma (SecE) subunits. Can form oligomers of the heterotrimer.

The protein resides in the cell membrane. Involved in protein export. The function of the beta subunit is unknown, but it may be involved in stabilization of the trimeric complex. The polypeptide is Preprotein translocase subunit SecG (Ignicoccus hospitalis (strain KIN4/I / DSM 18386 / JCM 14125)).